A 153-amino-acid polypeptide reads, in one-letter code: Arachidonate 5-lipoxygenase-activating protein (153 aa).

At 1–8 the chain is on the lumenal side; that stretch reads MDQEAMGN. A helical transmembrane segment spans residues 9-30; sequence IVLLAIVTLISVVQNAFFAHKV. Topologically, residues 31 to 52 are cytoplasmic; the sequence is EHESKTHNGRSFQRTGTPAFER. The chain crosses the membrane as a helical span at residues 53–77; sequence VYTANQNCVDAYPTFLVVLWSAGLF. Residues 78–80 are Lumenal-facing; the sequence is CSQ. Residues 81–102 traverse the membrane as a helical segment; it reads VPAAFAGLMYLFVRQKYFVGYL. Residues 103–107 lie on the Cytoplasmic side of the membrane; the sequence is GERTQ. Residues 108-115 lie within the membrane without spanning it; it reads STPGYIFG. The chain crosses the membrane as a helical span at residues 116–128; it reads KRIILFLFLMSLA. Over 129–153 the chain is Lumenal; it reads GIFNYFLILFFGSDFENYIKTITTT.

This sequence belongs to the MAPEG family. As to quaternary structure, homotrimer. Interacts with LTC4S and ALOX5.

It is found in the nucleus membrane. The protein localises to the endoplasmic reticulum membrane. Its function is as follows. Required for leukotriene biosynthesis by ALOX5 (5-lipoxygenase). Anchors ALOX5 to the membrane. Binds arachidonic acid, and could play an essential role in the transfer of arachidonic acid to ALOX5. Binds to MK-886, a compound that blocks the biosynthesis of leukotrienes. In Sus scrofa (Pig), this protein is Arachidonate 5-lipoxygenase-activating protein (ALOX5AP).